The chain runs to 1870 residues: Dedicator of cytokinesis protein 5 (1870 aa).

Residues lysine 8–alanine 69 form the SH3 domain. At serine 365 the chain carries Phosphoserine. The C2 DOCK-type domain occupies arginine 443 to cysteine 627. Residue lysine 818 is modified to N6-acetyllysine. The DOCKER domain maps to tyrosine 1231–leucine 1642. Positions valine 1679–glutamate 1702 are disordered. Serine 1756, serine 1766, serine 1785, and serine 1789 each carry phosphoserine. Residues asparagine 1772–glutamine 1870 form a disordered region. Pro residues predominate over residues glutamine 1784 to threonine 1794. Threonine 1794 bears the Phosphothreonine mark. A compositionally biased stretch (polar residues) spans alanine 1797 to threonine 1808. Position 1814 is a phosphothreonine (threonine 1814). Over residues proline 1815 to serine 1824 the composition is skewed to pro residues. Serine 1834 and serine 1869 each carry phosphoserine.

It belongs to the DOCK family. In terms of assembly, interacts with CRK and CRKL. Interacts (via N-terminus) with tensin TNS3 (via N-terminus); the interaction increases DOCK5 guanine nucleotide exchange activity towards Rac. Interacts with ELMO1.

It is found in the cytoplasm. It localises to the cell membrane. The protein resides in the cell projection. Its subcellular location is the podosome. Functionally, guanine nucleotide exchange factor (GEF) for Rho and Rac. GEF proteins activate small GTPases by exchanging bound GDP for free GTP. Along with DOCK1, mediates CRK/CRKL regulation of epithelial and endothelial cell spreading and migration on type IV collagen. This is Dedicator of cytokinesis protein 5 (DOCK5) from Homo sapiens (Human).